The primary structure comprises 215 residues: MFPLLGLFGGTFDPIHKGHLALANELIQKLPSLTEIQFIPSRQPPHRPSPLASPADRLEMIKRAIANQPNLILNDVEIKGNDISYTINTLKILRPLFLTHALCFILSTDAFADFKHWHQSSVILEYCHLIVVNRPNYRLPQQPWLSDLLSHHQTENAEDLGRFQFGKIFFQTLSPRPISATQIRHYLAKGDYEIVAPLLPKTVLTYIKAHKLYQQ.

This sequence belongs to the NadD family.

It carries out the reaction nicotinate beta-D-ribonucleotide + ATP + H(+) = deamido-NAD(+) + diphosphate. The protein operates within cofactor biosynthesis; NAD(+) biosynthesis; deamido-NAD(+) from nicotinate D-ribonucleotide: step 1/1. In terms of biological role, catalyzes the reversible adenylation of nicotinate mononucleotide (NaMN) to nicotinic acid adenine dinucleotide (NaAD). This Coxiella burnetii (strain RSA 331 / Henzerling II) protein is Probable nicotinate-nucleotide adenylyltransferase.